Reading from the N-terminus, the 36-residue chain is Pancreatic polypeptide (36 aa).

The residue at position 36 (Y36) is a Tyrosine amide.

The protein belongs to the NPY family.

The protein resides in the secreted. Functionally, hormone secreted by pancreatic cells that acts as a regulator of pancreatic and gastrointestinal functions probably by signaling through the G protein-coupled receptor NPY4R2. The sequence is that of Pancreatic polypeptide (PPY) from Ceratotherium simum (White rhinoceros).